The primary structure comprises 349 residues: Protein-glutamate methylesterase/protein-glutamine glutaminase (349 aa).

Positions 2–118 (RVLVVDDSAL…VDLSSVAQEL (117 aa)) constitute a Response regulatory domain. D52 bears the 4-aspartylphosphate mark. Residues 159–345 (VLIGSSTGGP…EEIVRFLEVK (187 aa)) form the CheB-type methylesterase domain. Catalysis depends on residues S164, H191, and D287.

Belongs to the CheB family. Phosphorylated by CheA. Phosphorylation of the N-terminal regulatory domain activates the methylesterase activity.

It localises to the cytoplasm. It carries out the reaction [protein]-L-glutamate 5-O-methyl ester + H2O = L-glutamyl-[protein] + methanol + H(+). It catalyses the reaction L-glutaminyl-[protein] + H2O = L-glutamyl-[protein] + NH4(+). Involved in chemotaxis. Part of a chemotaxis signal transduction system that modulates chemotaxis in response to various stimuli. Catalyzes the demethylation of specific methylglutamate residues introduced into the chemoreceptors (methyl-accepting chemotaxis proteins or MCP) by CheR. Also mediates the irreversible deamidation of specific glutamine residues to glutamic acid. In Archaeoglobus fulgidus (strain ATCC 49558 / DSM 4304 / JCM 9628 / NBRC 100126 / VC-16), this protein is Protein-glutamate methylesterase/protein-glutamine glutaminase.